Here is a 500-residue protein sequence, read N- to C-terminus: Potassium voltage-gated channel subfamily V member 1 (500 aa).

Residues 1–210 (MPSSGRALLD…EKPGSSTAAR (210 aa)) are Cytoplasmic-facing. Residues 168-181 (KKDTEDQESQHESE) show a composition bias toward basic and acidic residues. Residues 168-189 (KKDTEDQESQHESEQDFSQGPC) are disordered. A helical membrane pass occupies residues 211 to 231 (IFGVISIIFVVVSIINMALMS). Topologically, residues 232–238 (AELSWLD) are extracellular. Residues 239-259 (LQLLEILEYVCISWFTGEFVL) traverse the membrane as a helical segment. Residues 260–276 (RFLCVRDRCRFLRKVPN) are Cytoplasmic-facing. The chain crosses the membrane as a helical span at residues 277 to 297 (IIDLLAILPFYITLLVESLSG). Residues 298 to 309 (SQTTQELENVGR) are Extracellular-facing. Residues 310-331 (IVQVLRLLRALRMLKLGRHSTG) form a helical; Voltage-sensor membrane-spanning segment. Residues 332–345 (LRSLGMTITQCYEE) are Cytoplasmic-facing. Residues 346-366 (VGLLLLFLSVGISIFSTVEYF) form a helical membrane-spanning segment. Positions 392–397 (TVGYGD) match the Selectivity filter motif. Residues 407-427 (IVAFMCILSGILVLALPIAII) form a helical membrane-spanning segment. At 428–500 (NDRFSACYFT…RSSGGDDFWF (73 aa)) the chain is on the cytoplasmic side.

The protein belongs to the potassium channel family. V (TC 1.A.1.2) subfamily. Kv8.1/KCNV1 sub-subfamily. As to quaternary structure, heteromultimer with KCNB1 and KCNB2. Interacts with KCNC4 and KCND1. As to expression, detected in brain.

The protein resides in the cell membrane. Its function is as follows. Potassium channel subunit that does not form functional channels by itself. Modulates KCNB1 and KCNB2 channel activity by shifting the threshold for inactivation to more negative values and by slowing the rate of inactivation. Can down-regulate the channel activity of KCNB1, KCNB2, KCNC4 and KCND1, possibly by trapping them in intracellular membranes. The protein is Potassium voltage-gated channel subfamily V member 1 (KCNV1) of Homo sapiens (Human).